A 226-amino-acid polypeptide reads, in one-letter code: Protein GrpE (226 aa).

2 disordered regions span residues 1 to 31 (MTPN…PDTL) and 189 to 226 (VSKG…PAEA). Over residues 192–218 (GGPKAAEASKPAGEAPKPAGEAPKPAG) the composition is skewed to low complexity.

This sequence belongs to the GrpE family. As to quaternary structure, homodimer.

The protein localises to the cytoplasm. Functionally, participates actively in the response to hyperosmotic and heat shock by preventing the aggregation of stress-denatured proteins, in association with DnaK and GrpE. It is the nucleotide exchange factor for DnaK and may function as a thermosensor. Unfolded proteins bind initially to DnaJ; upon interaction with the DnaJ-bound protein, DnaK hydrolyzes its bound ATP, resulting in the formation of a stable complex. GrpE releases ADP from DnaK; ATP binding to DnaK triggers the release of the substrate protein, thus completing the reaction cycle. Several rounds of ATP-dependent interactions between DnaJ, DnaK and GrpE are required for fully efficient folding. The chain is Protein GrpE from Methylobacterium nodulans (strain LMG 21967 / CNCM I-2342 / ORS 2060).